Reading from the N-terminus, the 330-residue chain is GTPase Obg (330 aa).

In terms of domain architecture, Obg spans 1-159 (MHFIDEVKIY…MWIHLRLKLL (159 aa)). One can recognise an OBG-type G domain in the interval 160–327 (SDVGLVGLPN…IVKLALEIIK (168 aa)). GTP-binding positions include 166–173 (GLPNAGKS), 191–195 (FTTLV), 212–215 (DIPG), 279–282 (NKCD), and 308–310 (STY). Mg(2+) contacts are provided by Ser-173 and Thr-193.

The protein belongs to the TRAFAC class OBG-HflX-like GTPase superfamily. OBG GTPase family. As to quaternary structure, monomer. Mg(2+) is required as a cofactor.

It is found in the cytoplasm. Functionally, an essential GTPase which binds GTP, GDP and possibly (p)ppGpp with moderate affinity, with high nucleotide exchange rates and a fairly low GTP hydrolysis rate. Plays a role in control of the cell cycle, stress response, ribosome biogenesis and in those bacteria that undergo differentiation, in morphogenesis control. This chain is GTPase Obg, found in Rickettsia typhi (strain ATCC VR-144 / Wilmington).